Here is a 477-residue protein sequence, read N- to C-terminus: MSVKVDGMINKKSKTHSKKLDARALAEKIKKNALKQQAQEEPAKEENVAENFDTVVDPTAELKFKSFNELKLIPELLEAIQQMKFTKPTPIQSEAIPHALEGKDIIGLAQTGSGKTAAFAIPILQALWEAQAAYYGLVLAPTRELAYQIKETFDALGSSMGLRSVCIVGGMDMMDQARDLMRKPHILVATPGRIMDHLEHTKGFSLKNLKYLVMDEADRLLDMDFGPALDKILKIIPTQRTTYLFSATMTNKIAKLQRASLHNPVRVAVSNKYQTADNLVQSMMLVSDGYKNTYLIHLLNEFLGKSIIIFTRTCAHSQRTALLARILGFSAVPLHGQLTQAQRLGSLNKFKAGKANILIATDVAARGLDIPSVDIVINYDIPTDSKAYIHRVGRTARAGKSGKSISLITQYDLEMYLRIESVLGKKLPKDPSPSKAVLDTLHVHVDRASAEAIRQTKDFHEKRNPKKNRDDRDREER.

A disordered region spans residues 1–22; the sequence is MSVKVDGMINKKSKTHSKKLDA. The Q motif signature appears at 65–93; sequence KSFNELKLIPELLEAIQQMKFTKPTPIQS. The Helicase ATP-binding domain occupies 96 to 267; the sequence is IPHALEGKDI…RASLHNPVRV (172 aa). 109–116 provides a ligand contact to ATP; that stretch reads AQTGSGKT. The DEAD box motif lies at 215–218; sequence DEAD. A Helicase C-terminal domain is found at 294–438; that stretch reads YLIHLLNEFL…KDPSPSKAVL (145 aa). The disordered stretch occupies residues 452-477; the sequence is AIRQTKDFHEKRNPKKNRDDRDREER.

Belongs to the DEAD box helicase family. DDX47/RRP3 subfamily. In terms of assembly, interacts with the SSU processome.

It is found in the nucleus. The catalysed reaction is ATP + H2O = ADP + phosphate + H(+). Its function is as follows. ATP-dependent rRNA helicase required for pre-ribosomal RNA processing. Involved in the maturation of the 35S-pre-rRNA and to its cleavage to mature 18S rRNA. This chain is ATP-dependent rRNA helicase RRP3, found in Debaryomyces hansenii (strain ATCC 36239 / CBS 767 / BCRC 21394 / JCM 1990 / NBRC 0083 / IGC 2968) (Yeast).